Consider the following 342-residue polypeptide: Gibberellin cluster GA4 desaturase (342 aa).

The disordered stretch occupies residues Pro-127–Ala-183.

This sequence belongs to the asaB hydroxylase/desaturase family.

The protein operates within plant hormone biosynthesis; gibberellin biosynthesis. GA4 desaturase; part of the gene cluster that mediates the biosynthesis of gibberellins (GAs), diterpenoids that may provide a selective advantage during infection of the preferred host plant, rice. Gibberellins (GAs) are diterpenoids and are synthesized via the mevalonate pathway. Biosynthesis of the major metabolite GA3 (gibberellic acid) from geranylgeranyl diphosphate (GGPP) requires 13 steps. The GGPP produced by the geranylgeranyl diphosphate synthase GGS2 is converted to ent-kaurene via ent-copalyldiphosphate in a two-step cyclization reaction performed by the bifunctional ent-copalyl diphosphate synthase/ent-kaurene synthase enzyme (CPS/KS). Ent-Kaurene is metabolized to GAs by a series of oxidation reactions catalyzed by cytochrome P450 monooxygenases. Cytochrome P450 monooxygenase P450-4 is an ent-kaurene oxidase that catalyzes the three oxidation steps between ent-kaurene and ent-kaurenoic acid. The highly multifunctional cytochrome P450 monooxygenase P450-1 then catalyzes four steps involving oxidation at two carbon atoms, in the main pathway from ent-kaurenoic acid to GA14 via GA12-aldehyde as well as producing kaurenolides and fujenoic acids as by-products. The cytochrome P450 monooxygenase P450-2 then converts GA14 to GA4 by removal of C-20. GA4 is further converted to GA7 by the GA4 desaturase DES via 1,2-desaturation before cytochrome P450 monooxygenase P450-3, a 13-hydroxylase, hydroxylates GA7 to GA3, the final product of the GA-biosynthetic pathway. The polypeptide is Gibberellin cluster GA4 desaturase (Gibberella fujikuroi (strain CBS 195.34 / IMI 58289 / NRRL A-6831) (Bakanae and foot rot disease fungus)).